The chain runs to 258 residues: Short-chain dehydrogenase/reductase aba4 (258 aa).

Positions 20, 66, and 130 each coordinate NADP(+). Active-site proton donor residues include Ser-146 and Tyr-160. NADP(+) is bound by residues Tyr-160, Lys-164, Ile-193, and Thr-195. The active-site Lowers pKa of active site Tyr is Lys-164.

Belongs to the short-chain dehydrogenases/reductases (SDR) family.

It participates in hormone biosynthesis. Functionally, short-chain dehydrogenase/reductase; part of the gene cluster that mediates the biosynthesis of abscisic acid (ABA), a phytohormone that acts antagonistically toward salicylic acid (SA), jasmonic acid (JA) and ethylene (ETH) signaling, to impede plant defense responses. The first step of the pathway catalyzes the reaction from farnesyl diphosphate to alpha-ionylideneethane performed by the alpha-ionylideneethane synthase aba3 via a three-step reaction mechanism involving 2 neutral intermediates, beta-farnesene and allofarnesene. The cytochrome P450 monooxygenase aba1 might then be involved in the conversion of alpha-ionylideneethane to alpha-ionylideneacetic acid. Alpha-ionylideneacetic acid is further converted to abscisic acid in 2 steps involving the cytochrome P450 monooxygenase aba2 and the short-chain dehydrogenase/reductase aba4, via the intermediates 1'-deoxy-ABA or 1',4'-trans-diol-ABA, depending on the order of action of these 2 enzymes. Aba2 is responsible for the hydroxylation of carbon atom C-1' and aba4 might be involved in the oxidation of the C-4' carbon atom. This is Short-chain dehydrogenase/reductase aba4 from Botryotinia fuckeliana (strain B05.10) (Noble rot fungus).